The chain runs to 82 residues: Small ribosomal subunit protein bS16 (82 aa).

This sequence belongs to the bacterial ribosomal protein bS16 family.

The chain is Small ribosomal subunit protein bS16 from Shewanella sp. (strain ANA-3).